Reading from the N-terminus, the 111-residue chain is Putative single-stranded DNA-binding protein ycf41 (111 aa).

An SSB domain is found at 1-98 (MNKCNLLVQI…FSTSRIFKYK (98 aa)).

It localises to the plastid. It is found in the chloroplast. In Porphyra purpurea (Red seaweed), this protein is Putative single-stranded DNA-binding protein ycf41 (ycf41).